The primary structure comprises 277 residues: Protein PTST, chloroplastic (277 aa).

Residues 1-44 (MGCVPRIEFGCSSQSLTLSWNLRAWNLCRLNTISHFQKLPYPLV) constitute a chloroplast transit peptide. Positions 95-152 (DTERSKLVKKLSEANQQNRFLKRQLKTQEHEITNIKTELALMELEVQALVKLAEEIAN) form a coiled coil.

As to quaternary structure, interacts with GBSS1.

The protein resides in the plastid. Its subcellular location is the chloroplast stroma. Functionally, involved in targeting GBSS1 to the starch granule. Was originally thought to be a carbohydrate-binding scaffold protein, but it has been shown that it is mainly found as a soluble protein and that interaction with GBSS1 is a pre-requisite for subsequent starch granule binding. Dissociation from starch as a function of pH, Mg(2+) concentration or redox state is not observed. Interacts primarily with amylopectin and is required for amylose synthesis. This Arabidopsis thaliana (Mouse-ear cress) protein is Protein PTST, chloroplastic.